Reading from the N-terminus, the 554-residue chain is Probable phospholipase D F09G2.8 (554 aa).

Residues 1–123 (MPLRLINFRQ…GNSRNRIIKP (123 aa)) lie on the Cytoplasmic side of the membrane. The chain crosses the membrane as a helical; Signal-anchor for type II membrane protein span at residues 124 to 144 (ACVPISIVSLFIIALVFLPLF). At 145 to 554 (NEEDLASPIK…DWNSEYSKDL (410 aa)) the chain is on the extracellular side. Residues Asn181, Asn208, Asn244, and Asn266 are each glycosylated (N-linked (GlcNAc...) asparagine). A PLD phosphodiesterase 1 domain is found at 272–299 (GSGIIHTKFILSDIATLYIGSANMDWKS). Residues His277, Lys279, and Asp284 contribute to the active site. 4 N-linked (GlcNAc...) asparagine glycosylation sites follow: Asn333, Asn350, Asn468, and Asn513. The region spanning 492-518 (FTRVNHAKYMVTEDIAYIGTSNWSGDY) is the PLD phosphodiesterase 2 domain.

This sequence belongs to the phospholipase D family.

Its subcellular location is the membrane. The enzyme catalyses a 1,2-diacyl-sn-glycero-3-phosphocholine + H2O = a 1,2-diacyl-sn-glycero-3-phosphate + choline + H(+). This is Probable phospholipase D F09G2.8 from Caenorhabditis elegans.